The following is a 174-amino-acid chain: Transcription factor bHLH36 (174 aa).

In terms of domain architecture, bHLH spans 1 to 53 (MEKMMHRETERQRRQEMASLYASLRSLLPLHFIKGKRSTSDQVNEAVNYIKYL).

Homodimer. As to expression, expressed constitutively in roots, leaves, stems, and flowers.

Its subcellular location is the nucleus. The polypeptide is Transcription factor bHLH36 (BHLH36) (Arabidopsis thaliana (Mouse-ear cress)).